The following is a 1447-amino-acid chain: Regulator of G-protein signaling 12 (1447 aa).

The disordered stretch occupies residues 1-21 (MFRAGEASKRPLPGPSPPRVR). Positions 22-98 (SVEVARGRAG…GVLHMVIAEG (77 aa)) constitute a PDZ domain. 2 positions are modified to phosphoserine: Ser172 and Ser195. Lys196 participates in a covalent cross-link: Glycyl lysine isopeptide (Lys-Gly) (interchain with G-Cter in SUMO2). A PID domain is found at 228–340 (VAMIVGYLGS…GALRTSCHVF (113 aa)). Disordered regions lie at residues 410 to 429 (ADAH…IGNF) and 443 to 482 (LGGS…DPEG). Residues 413 to 425 (HQNNSTSSNSDSG) show a composition bias toward polar residues. Over residues 451 to 464 (GPGGSAWDGVGGRG) the composition is skewed to gly residues. Residues Arg524 and Arg633 each carry the omega-N-methylarginine modification. The segment at 618-652 (NVRKTKEDKKGSKFGRGTGLTQPSQRTSARRSFGR) is disordered. A phosphoserine mark is found at Ser661 and Ser671. Positions 715–832 (SFERLLQDPV…LKSPLYQECI (118 aa)) constitute an RGS domain. Positions 843–853 (DSQQVPSSPAS) are enriched in polar residues. The interval 843 to 941 (DSQQVPSSPA…RESQGSVSSA (99 aa)) is disordered. Phosphoserine is present on residues Ser850 and Ser879. Residues 914–923 (EHGDHADDAL) show a composition bias toward basic and acidic residues. Ser943 bears the Phosphoserine mark. RBD domains are found at residues 962–1032 (KHCC…LEKR) and 1034–1104 (LFRL…LEEK). Residues 1103-1117 (EKDPSRGKASADKQK) are compositionally biased toward basic and acidic residues. Positions 1103 to 1169 (EKDPSRGKAS…RDPRLSKREE (67 aa)) are disordered. Polar residues predominate over residues 1122-1136 (KQNTAVNSSSRNHSA). A compositionally biased stretch (basic and acidic residues) spans 1151 to 1169 (IKGENGKNARDPRLSKREE). Residues 1187-1209 (AEEFFELISKAQSNRADDQRGLL) enclose the GoLoco domain. Residues 1240 to 1447 (GFSKRSATGN…KTSAHHATFV (208 aa)) form a disordered region. Over residues 1244–1258 (RSATGNGRESASQPG) the composition is skewed to polar residues. Low complexity-rich tracts occupy residues 1267–1280 (SSDS…SASS) and 1289–1298 (PPGQKSPSGP). Positions 1301-1313 (TPQSPVSLAQEGT) are enriched in polar residues.

In terms of assembly, interacts with GNAI1. Interacts with GNAI2 and GNAI3; the interactions are GDP-dependent. Isoform 3 is brain specific.

The protein localises to the nucleus. It localises to the cytoplasm. The protein resides in the cell projection. Its subcellular location is the dendrite. It is found in the synapse. The protein localises to the nucleus matrix. Its function is as follows. Regulates G protein-coupled receptor signaling cascades. Inhibits signal transduction by increasing the GTPase activity of G protein alpha subunits, thereby driving them into their inactive GDP-bound form. In terms of biological role, behaves as a cell cycle-dependent transcriptional repressor, promoting inhibition of S-phase DNA synthesis. In Homo sapiens (Human), this protein is Regulator of G-protein signaling 12 (RGS12).